Consider the following 552-residue polypeptide: ATP synthase subunit alpha, mitochondrial (552 aa).

Residues 1–47 (MSIFSARLASSVARNLPKAANQVACKAAYPAASLAARKLHVASTQRS) constitute a mitochondrion transit peptide. 211 to 218 (GDRQTGKT) contacts ATP.

This sequence belongs to the ATPase alpha/beta chains family. F-type ATPases have 2 components, CF(1) - the catalytic core - and CF(0) - the membrane proton channel. CF(1) has five subunits: alpha(3), beta(3), gamma(1), delta(1), epsilon(1). CF(0) has three main subunits: a, b and c.

It localises to the mitochondrion inner membrane. In terms of biological role, mitochondrial membrane ATP synthase (F(1)F(0) ATP synthase or Complex V) produces ATP from ADP in the presence of a proton gradient across the membrane which is generated by electron transport complexes of the respiratory chain. F-type ATPases consist of two structural domains, F(1) - containing the extramembraneous catalytic core, and F(0) - containing the membrane proton channel, linked together by a central stalk and a peripheral stalk. During catalysis, ATP synthesis in the catalytic domain of F(1) is coupled via a rotary mechanism of the central stalk subunits to proton translocation. Subunits alpha and beta form the catalytic core in F(1). Rotation of the central stalk against the surrounding alpha(3)beta(3) subunits leads to hydrolysis of ATP in three separate catalytic sites on the beta subunits. Subunit alpha does not bear the catalytic high-affinity ATP-binding sites. This chain is ATP synthase subunit alpha, mitochondrial (blw), found in Drosophila melanogaster (Fruit fly).